Reading from the N-terminus, the 201-residue chain is ATP-dependent Clp protease proteolytic subunit (201 aa).

Ser101 (nucleophile) is an active-site residue. Residue His126 is part of the active site.

Belongs to the peptidase S14 family. Component of the chloroplastic Clp protease core complex.

Its subcellular location is the plastid. The protein localises to the chloroplast stroma. The catalysed reaction is Hydrolysis of proteins to small peptides in the presence of ATP and magnesium. alpha-casein is the usual test substrate. In the absence of ATP, only oligopeptides shorter than five residues are hydrolyzed (such as succinyl-Leu-Tyr-|-NHMec, and Leu-Tyr-Leu-|-Tyr-Trp, in which cleavage of the -Tyr-|-Leu- and -Tyr-|-Trp bonds also occurs).. In terms of biological role, cleaves peptides in various proteins in a process that requires ATP hydrolysis. Has a chymotrypsin-like activity. Plays a major role in the degradation of misfolded proteins. This Staurastrum punctulatum (Green alga) protein is ATP-dependent Clp protease proteolytic subunit.